The chain runs to 122 residues: Large ribosomal subunit protein uL18 (122 aa).

Belongs to the universal ribosomal protein uL18 family. In terms of assembly, part of the 50S ribosomal subunit; part of the 5S rRNA/L5/L18/L25 subcomplex. Contacts the 5S and 23S rRNAs.

Functionally, this is one of the proteins that bind and probably mediate the attachment of the 5S RNA into the large ribosomal subunit, where it forms part of the central protuberance. The sequence is that of Large ribosomal subunit protein uL18 from Synechococcus sp. (strain JA-2-3B'a(2-13)) (Cyanobacteria bacterium Yellowstone B-Prime).